A 540-amino-acid polypeptide reads, in one-letter code: NADH-quinone oxidoreductase subunit N 1 (540 aa).

13 consecutive transmembrane segments (helical) span residues 11 to 31, 52 to 72, 109 to 129, 142 to 162, 195 to 215, 250 to 270, 284 to 306, 324 to 344, 352 to 372, 386 to 406, 431 to 451, 464 to 486, and 508 to 528; these read ILPE…DVLT, AVGL…LFTV, FTMI…LLAM, ALLI…EFIL, FLFG…TYGF, LILG…VVPF, PVTA…RLLT, WTSI…LAAL, LLAY…LLWA, LIYY…VLAV, LMMT…GFWA, AVPL…LRFL, and AAII…NLIW.

The protein belongs to the complex I subunit 2 family. NDH-1 is composed of 14 different subunits. Subunits NuoA, H, J, K, L, M, N constitute the membrane sector of the complex.

The protein localises to the cell membrane. It catalyses the reaction a quinone + NADH + 5 H(+)(in) = a quinol + NAD(+) + 4 H(+)(out). NDH-1 shuttles electrons from NADH, via FMN and iron-sulfur (Fe-S) centers, to quinones in the respiratory chain. The immediate electron acceptor for the enzyme in this species is believed to be ubiquinone. Couples the redox reaction to proton translocation (for every two electrons transferred, four hydrogen ions are translocated across the cytoplasmic membrane), and thus conserves the redox energy in a proton gradient. The polypeptide is NADH-quinone oxidoreductase subunit N 1 (Roseiflexus castenholzii (strain DSM 13941 / HLO8)).